The sequence spans 325 residues: Ribose-phosphate pyrophosphokinase (325 aa).

ATP is bound by residues 45–47 (NGE) and 104–105 (RQ). Mg(2+) is bound by residues His-138 and Asp-178. Lys-202 is an active-site residue. Residues Arg-204, Asp-230, and 234 to 238 (DTGGT) each bind D-ribose 5-phosphate.

The protein belongs to the ribose-phosphate pyrophosphokinase family. Class I subfamily. As to quaternary structure, homohexamer. Mg(2+) serves as cofactor.

The protein localises to the cytoplasm. It catalyses the reaction D-ribose 5-phosphate + ATP = 5-phospho-alpha-D-ribose 1-diphosphate + AMP + H(+). The protein operates within metabolic intermediate biosynthesis; 5-phospho-alpha-D-ribose 1-diphosphate biosynthesis; 5-phospho-alpha-D-ribose 1-diphosphate from D-ribose 5-phosphate (route I): step 1/1. Its function is as follows. Involved in the biosynthesis of the central metabolite phospho-alpha-D-ribosyl-1-pyrophosphate (PRPP) via the transfer of pyrophosphoryl group from ATP to 1-hydroxyl of ribose-5-phosphate (Rib-5-P). In Corynebacterium efficiens (strain DSM 44549 / YS-314 / AJ 12310 / JCM 11189 / NBRC 100395), this protein is Ribose-phosphate pyrophosphokinase.